Consider the following 480-residue polypeptide: Serine carboxypeptidase-like 35 (480 aa).

The signal sequence occupies residues 1–20 (MKKNALWLLCILVLPAIACG). 2 N-linked (GlcNAc...) asparagine glycosylation sites follow: N79 and N146. 3 disulfide bridges follow: C95-C363, C257-C270, and C294-C331. The active site involves S188. N265 carries N-linked (GlcNAc...) asparagine glycosylation. N352 is a glycosylation site (N-linked (GlcNAc...) asparagine). Active-site residues include D399 and H452.

The protein belongs to the peptidase S10 family. Expressed in seedlings, flowers and siliques.

It localises to the secreted. Functionally, probable carboxypeptidase. This is Serine carboxypeptidase-like 35 (SCPL35) from Arabidopsis thaliana (Mouse-ear cress).